A 532-amino-acid polypeptide reads, in one-letter code: Wee1-like protein kinase 2 (532 aa).

The interval 123-166 (INPFTPDTVRRNSEHYKRKSQRSDDDEDYGPRSKEIQNSSEDES) is disordered. One can recognise a Protein kinase domain in the interval 188 to 465 (FLELACIGVG…RHDVLCKERA (278 aa)). ATP contacts are provided by residues 194-202 (IGVGEFGSV) and Lys217. The active-site Proton acceptor is Asp315. Mg(2+) is bound by residues Asn320 and Asp354. Residues 469–495 (ATQLRKELNVEKFRTAMLERELKEARL) are a coiled coil.

It belongs to the protein kinase superfamily. Ser/Thr protein kinase family. WEE1 subfamily.

It localises to the nucleus. The enzyme catalyses L-tyrosyl-[protein] + ATP = O-phospho-L-tyrosyl-[protein] + ADP + H(+). Oocyte-specific protein tyrosine kinase that phosphorylates and inhibits cdk1 and acts as a key regulator of meiosis. Required to maintain meiotic arrest in oocytes by phosphorylating cdk1 at 'Tyr-15', leading to inhibit cdk1 activity and prevent meiotic reentry. The chain is Wee1-like protein kinase 2 (wee2) from Danio rerio (Zebrafish).